The chain runs to 478 residues: Proline--tRNA ligase (478 aa).

Belongs to the class-II aminoacyl-tRNA synthetase family. ProS type 3 subfamily. As to quaternary structure, homodimer.

It is found in the cytoplasm. It catalyses the reaction tRNA(Pro) + L-proline + ATP = L-prolyl-tRNA(Pro) + AMP + diphosphate. Catalyzes the attachment of proline to tRNA(Pro) in a two-step reaction: proline is first activated by ATP to form Pro-AMP and then transferred to the acceptor end of tRNA(Pro). The sequence is that of Proline--tRNA ligase from Oceanobacillus iheyensis (strain DSM 14371 / CIP 107618 / JCM 11309 / KCTC 3954 / HTE831).